The primary structure comprises 2474 residues: Polyprotein P1234 (2474 aa).

Residues 28–259 form the Alphavirus-like MT domain; the sequence is EPRQVTPNDH…ESRKLLKSWH (232 aa). Residue His37 is the For mRNA-capping enzyme nsP1 activity of the active site. Zn(2+) is bound by residues His79, Glu129, Cys134, and Cys141. The interval 295–450 is membrane-binding and oligomerization; sequence GLYGKTTGYA…QKVQAEFDSF (156 aa). 2 S-palmitoyl cysteine; by host lipidation sites follow: Cys417 and Cys419. The tract at residues 482-502 is disordered; it reads PYSGDAQEARDAEKEAEEERE. A (+)RNA virus helicase ATP-binding domain is found at 690–842; it reads DLTNPPYHEF…HNICTQVYHK (153 aa). Residue 721–728 coordinates a ribonucleoside 5'-triphosphate; the sequence is GVPGSGKS. Positions 843–991 constitute a (+)RNA virus helicase C-terminal domain; the sequence is SISRRCTLPV…IKEWEVEHAS (149 aa). One can recognise a Peptidase C9 domain in the interval 1004-1327; that stretch reads DTFQNKANVC…NQLNAAFVGQ (324 aa). Residues 1005–1024 form a nucleolus localization signal region; sequence TFQNKANVCWAKSLVPILET. The active-site For cysteine protease nsP2 activity is the Cys1013. Residues 1058–1067 carry the Nuclear export signal motif; that stretch reads TRMYGVDLDS. His1083 serves as the catalytic For cysteine protease nsP2 activity. The Nuclear localization signal motif lies at 1182–1186; sequence PTKRV. Residues 1334 to 1493 enclose the Macro domain; that stretch reads APSYRVKRMD…KISEAIQMRT (160 aa). Asp1343, Asn1357, Gly1365, Gly1445, Val1446, and Tyr1447 together coordinate ADP-D-ribose. Zn(2+)-binding residues include Cys1595, Cys1597, Cys1620, and Cys1638. Residues 1651–1672 are disordered; that stretch reads RVSPREYRPSQESVQEASTTTS. The tract at residues 1659–1857 is HVD; sequence PSQESVQEAS…TCSDTDDELR (199 aa). Residues 1660–1672 are compositionally biased toward polar residues; it reads SQESVQEASTTTS. Interaction with host CD2AP regions lie at residues 1726–1739 and 1756–1767; these read VMST…RRRR and PMASVRFFRAEL. Residues 1745-1793 form an interaction with host FHL1 region; sequence VTCDEREGNITPMASVRFFRAELCPVVQETAETRDTAMSLQAPPSTATE. An FGDF; binding to host G3BP1 motif is present at residues 1812 to 1815; that stretch reads FGDF. The tract at residues 1820 to 1828 is interaction with host CD2AP; it reads IESLSSELL. The short motif at 1830–1833 is the FGDF; binding to host G3BP1 element; sequence FGDF. One can recognise a RdRp catalytic domain in the interval 2228–2343; it reads DTVLETDIAS…HGVVSDELMA (116 aa).

Homododecamer. The enzyme forms a membrane-associated dodecameric ring with a central channel for the exchange of between the viral replication factories and the host cytoplasm. Interacts with non-structural protein 3. Interacts with RNA-directed RNA polymerase nsP4. Interacts with protease nsP2. Interacts with itself. Interacts with host STING1; this interaction results in inhibition of cGAS-STING signaling and increased levels of palmitoylation and protein stabilization of nsP1. Interacts with host TMEM45B; this interaction leads to viral replication inhibition. In terms of assembly, interacts with mRNA-capping enzyme nsP1. Interacts (via C-terminus) with host G3BP1; this interaction inhibits the formation of host stress granules on viral mRNAs and the nsp3-G3BP1 complexes bind viral RNAs and probably orchestrate the assembly of viral replication complexes. Interacts (via C-terminus) with host G3BP2; this interaction inhibits the formation of host stress granules on viral mRNAs and the nsp3-G3BP2 complexes bind viral RNAs and probably orchestrate the assembly of viral replication complexes. Interacts (via C-terminus) with host NAP1L1. Interacts (via C-terminus) with host NAP1L4. Interacts (via C-terminus) with host DHX9; this interaction allows the recruitment of DHX9 to the plasma membrane, where it associates with viral replication complexes and may play a role in the translation-to-replication switch. Interacts (via C-terminus) with host FHL1 (via LIM domain 1); this interaction is required for viral RNA replication. Interacts (via C-terminus) with host CD2AP; this interaction plays a role in initiation of viral replication. Interacts (via C-terminus) with host SH3KBP1; this interaction plays a role in initiation of viral replication. As to quaternary structure, interacts with mRNA-capping enzyme nsP1. Interacts with protease nsP2. interacts with itself. Interacts with host TMEM45B; this interaction leads to viral replication inhibition. Interacts with RNA-directed RNA polymerase nsP4. Interacts with mRNA-capping enzyme nsP1. Interacts with KPNA1/karyopherin-alpha1; this interaction probably allows the active transport of protease nsP2 into the host nucleus. Mg(2+) serves as cofactor. It depends on Mn(2+) as a cofactor. Post-translationally, specific enzymatic cleavages in vivo yield mature proteins. The processing of the polyprotein is temporally regulated. In early stages (1.7 hpi), P1234 is first cleaved in trans through its nsP2 protease activity, releasing P123 and nsP4, which associate to form the early replication complex. At the same time, P1234 is also cut at the nsP1/nsP2 site early in infection but with lower efficiency. After replication of the viral minus-strand RNAs (4 hpi), the polyproteins are cut at the nsP1/nsP2 and nsP2/nsP3 sites very efficiently, preventing accumulation of P123 and P1234 and allowing the formation of the late replication complex. NsP3/nsP4 site is not cleaved anymore and P34 is produced rather than nsP4. In terms of processing, specific enzymatic cleavages in vivo yield mature proteins. The processing of the polyprotein is temporally regulated. In early stages (1.7 hpi), P123 is cleaved at the nsP1/nsP2 site with low efficiency. After replication of the viral minus-strand RNAs (4 hpi), the polyproteins are cut at the nsP1/nsP2 and nsP2/nsP3 sites very efficiently, preventing accumulation of P123 and allowing the formation of the late replication complex. Palmitoylated by host palmitoyltransferases ZDHHC2 and ZDHHC19. Palmitoylation is increased by the interacton with host STING1. Post-translationally, phosphorylated by host on serines and threonines. In terms of processing, ubiquitinated; targets the protein for rapid degradation via the ubiquitin system. Nsp4 is present in extremely low quantities due to low frequency of translation through the amber stop-codon and the degradation by the ubiquitin pathway.

Its subcellular location is the host cytoplasmic vesicle membrane. It localises to the host cell membrane. The protein localises to the host cell projection. The protein resides in the host filopodium. It is found in the host nucleus. Its subcellular location is the host cytoplasm. The enzyme catalyses GTP + S-adenosyl-L-methionine = N(7)-methyl-GTP + S-adenosyl-L-homocysteine. The catalysed reaction is N(7)-methyl-GTP + L-histidyl-[protein] = N(tele)-(N(7)-methylguanosine 5'-phospho)-L-histidyl-[protein] + diphosphate. It catalyses the reaction N(tele)-(N(7)-methylguanosine 5'-phospho)-L-histidyl-[protein] + a 5'-end diphospho-(purine-ribonucleoside) in mRNA + H(+) = a 5'-end (N(7)-methyl 5'-triphosphoguanosine)-(purine-ribonucleoside) in mRNA + L-histidyl-[protein]. It carries out the reaction a 5'-end triphospho-ribonucleoside in mRNA + H2O = a 5'-end diphospho-ribonucleoside in mRNA + phosphate + H(+). The enzyme catalyses a ribonucleoside 5'-triphosphate + H2O = a ribonucleoside 5'-diphosphate + phosphate + H(+). The catalysed reaction is ATP + H2O = ADP + phosphate + H(+). It catalyses the reaction RNA(n) + a ribonucleoside 5'-triphosphate = RNA(n+1) + diphosphate. It carries out the reaction 4-O-(ADP-D-ribosyl)-L-aspartyl-[protein] + H2O = L-aspartyl-[protein] + ADP-D-ribose + H(+). The enzyme catalyses 5-O-(ADP-D-ribosyl)-L-glutamyl-[protein] + H2O = L-glutamyl-[protein] + ADP-D-ribose + H(+). The catalysed reaction is RNA(n) + ATP = RNA(n)-3'-adenine ribonucleotide + diphosphate. It catalyses the reaction ADP-alpha-D-ribose 1''-phosphate + H2O = ADP-D-ribose + phosphate. In terms of biological role, inactive precursor of the viral replicase, which is activated by cleavages carried out by the viral protease nsP2. Its function is as follows. The early replication complex formed by the polyprotein P123 and nsP4 synthesizes minus-strand RNAs. As soon P123 is cleaved into mature proteins, the plus-strand RNAs synthesis begins. Functionally, cytoplasmic capping enzyme that catalyzes two virus-specific reactions: methyltransferase and guanylyltransferase. mRNA-capping is necessary since all viral RNAs are synthesized in the cytoplasm, and host capping enzymes are restricted to the nucleus. The enzymatic reaction involves a covalent link between 7-methyl-GMP and nsP1, whereas eukaryotic capping enzymes form a covalent complex only with GMP. nsP1 capping consists in the following reactions: GTP is first methylated into 7-methyl-GMP and then is covalently linked to nsP1 to form the m7GMp-nsP1 complex from which 7-methyl-GMP complex is transferred to the mRNA to create the cap structure. NsP1 is also needed for the initiation of the minus-strand RNAs synthesis. At the initiation of virus replication, mediates the assembly of the viral replication complex made of the non-structural proteins, the association of this complex with the inner face of the plasma membrane and the formation of membranous spherules that serve as replication complex factories. Forms the neck of these spherules with a central channel for mediating communication and the passage of RNA, nucleotides, and small proteins between the viral replication complex and the host cytoplasm. Palmitoylated nsP1 is remodeling host cell cytoskeleton, and induces filopodium-like structure formation at the surface of the host cell. Multifunctional protein whose N-terminus is part of the RNA polymerase complex and displays NTPase, RNA triphosphatase and helicase activities. NTPase and RNA triphosphatase are involved in viral RNA capping and helicase keeps a check on the dsRNA replication intermediates. The C-terminus harbors a protease that specifically cleaves the polyproteins and releases the mature proteins. Required for the shutoff of minus-strand RNAs synthesis. Specifically inhibits the host IFN response by promoting the nuclear export of host STAT1. Also inhibits host transcription by inducing the rapid proteasome-dependent degradation of POLR2A, a catalytic subunit of the RNAPII complex. The resulting inhibition of cellular protein synthesis serves to ensure maximal viral gene expression and to evade host immune response. In terms of biological role, seems to be essential for minus-strand RNAs and subgenomic 26S mRNAs synthesis. Displays mono-ADP-ribosylhydrolase activity. ADP-ribosylation is a post-translational modification that controls various processes of the host cell and the virus probably needs to revert it for optimal viral replication. Binds proteins of G3BP family and sequesters them into the viral RNA replication complexes thereby inhibiting the formation of host stress granules on viral mRNAs. The nsp3-G3BP complexes bind viral RNAs and probably orchestrate the assembly of viral replication complexes, thanks to the ability of G3BP family members to self-assemble and bind DNA. Its function is as follows. RNA dependent RNA polymerase. Replicates genomic and antigenomic RNA by recognizing replications specific signals. The early replication complex formed by the polyprotein P123 and nsP4 synthesizes minus-strand RNAs. The late replication complex composed of fully processed nsP1-nsP4 is responsible for the production of genomic and subgenomic plus-strand RNAs. The protein is Polyprotein P1234 of Chikungunya virus (strain S27-African prototype) (CHIKV).